Here is a 210-residue protein sequence, read N- to C-terminus: MELQLAIDLLNKEDAAELANKVKDYVDIVEIGTPIIYNEGLPAVKHMADNISNVKVLADMKIIDAADYEVSQAIKFGADVITILGVAEDASIKAAIEEAHKNNKQLLVDMIAVQDLEKRAKELDEMGADYIAVHTGYDLQAEGQSPLESLRTVKSVIKNSKVAVAGGIKPDTIKDIVAESPDLVIVGGGIANADDPVEAAKQCRAAIEGK.

This sequence belongs to the HPS/KGPDC family. HPS subfamily.

It carries out the reaction D-ribulose 5-phosphate + formaldehyde = D-arabino-hex-3-ulose 6-phosphate. It functions in the pathway one-carbon metabolism; formaldehyde assimilation via RuMP pathway; D-fructose 6-phosphate from D-ribulose 5-phosphate and formaldehyde: step 1/2. Catalyzes the condensation of ribulose 5-phosphate with formaldehyde to form 3-hexulose 6-phosphate. This Staphylococcus aureus (strain USA300) protein is 3-hexulose-6-phosphate synthase.